The primary structure comprises 437 residues: Argininosuccinate lyase (437 aa).

It belongs to the lyase 1 family. Argininosuccinate lyase subfamily.

It localises to the cytoplasm. The enzyme catalyses 2-(N(omega)-L-arginino)succinate = fumarate + L-arginine. Its pathway is amino-acid biosynthesis; L-arginine biosynthesis; L-arginine from L-ornithine and carbamoyl phosphate: step 3/3. In Clostridium novyi (strain NT), this protein is Argininosuccinate lyase.